We begin with the raw amino-acid sequence, 114 residues long: MTTKIERRIKIKYRVRNKVSGTAARPRMSVFRSNKQIYVQIIDDLSGKTLAAASSLGMTEKLPKKEVAAKVGEIIAKKAQEAGITTVVFDRNGYLYHGRVKEVADAARNGGLKF.

The protein belongs to the universal ribosomal protein uL18 family. In terms of assembly, part of the 50S ribosomal subunit; part of the 5S rRNA/L5/L18/L25 subcomplex. Contacts the 5S and 23S rRNAs.

This is one of the proteins that bind and probably mediate the attachment of the 5S RNA into the large ribosomal subunit, where it forms part of the central protuberance. The protein is Large ribosomal subunit protein uL18 of Bacteroides fragilis (strain ATCC 25285 / DSM 2151 / CCUG 4856 / JCM 11019 / LMG 10263 / NCTC 9343 / Onslow / VPI 2553 / EN-2).